The sequence spans 98 residues: NADH-ubiquinone oxidoreductase chain 4L (98 aa).

3 consecutive transmembrane segments (helical) span residues 1-21, 29-49, and 61-81; these read MPVVYVNIFLAFIVSLTGLLI, SLLCLEGMMLSLFVMLTVTVL, and IILLVFAACEAALGLSLLVMV.

The protein belongs to the complex I subunit 4L family. Core subunit of respiratory chain NADH dehydrogenase (Complex I) which is composed of 45 different subunits.

The protein localises to the mitochondrion inner membrane. It carries out the reaction a ubiquinone + NADH + 5 H(+)(in) = a ubiquinol + NAD(+) + 4 H(+)(out). In terms of biological role, core subunit of the mitochondrial membrane respiratory chain NADH dehydrogenase (Complex I) which catalyzes electron transfer from NADH through the respiratory chain, using ubiquinone as an electron acceptor. Part of the enzyme membrane arm which is embedded in the lipid bilayer and involved in proton translocation. The sequence is that of NADH-ubiquinone oxidoreductase chain 4L (MT-ND4L) from Helarctos malayanus (Malayan sun bear).